We begin with the raw amino-acid sequence, 497 residues long: MGQCRNWKWGLESFDFSINRRSSAPGQLESASQMRESWRHKAGRRMFSCPEESDPIQALRKLTELCHLWLRPDLHTKEQILDMLVMEQFMISMPQELQVLVKVNGVQSCKDLEDLLRNNRRPKKWSVVNFLGKEYLMQESDVEMAEIPASVRDDPRGVSSQRASSVNEMRPGEGQASQELQTLPRVPALSRRQEEDFLLPETTVMKSAPKALRPKPTLEKDLNVDREENTGLTSPEPQLPNGPSVVGAKEGKEPKKRASVENVDADTPSACVVEREASTHSGSRGDALNLRCPKRSKPDATSISQEGPQGGATPVGNSESPGKPEINSVYSPGPAGAVSHPNGQEAKELLPFACGVCNKRFTCNSKLAIHMRSHTGERPFQCNFCERCFTQLSDLRVHQRIHTGEKPYTCDICHKRFNRMFSLKCHKRSHTGEKPYKCKDCNQVFTYRKNLNEHKLIHSGEKPYKCPKCLRAFRRPETLKYHQKTHQETTAPRECEG.

The SCAN box domain maps to 41–123 (KAGRRMFSCP…DLLRNNRRPK (83 aa)). Positions 148 to 342 (PASVRDDPRG…GPAGAVSHPN (195 aa)) are disordered. Residues 158 to 167 (VSSQRASSVN) are compositionally biased toward polar residues. Basic and acidic residues-rich tracts occupy residues 216–229 (PTLE…REEN) and 249–259 (KEGKEPKKRAS). 5 C2H2-type zinc fingers span residues 352–374 (FACG…MRSH), 380–402 (FQCN…QRIH), 408–430 (YTCD…KRSH), 436–458 (YKCK…KLIH), and 464–486 (YKCP…QKTH).

It localises to the nucleus. The polypeptide is Putative zinc finger and SCAN domain-containing protein 5D (Homo sapiens (Human)).